The sequence spans 90 residues: Small ribosomal subunit protein bS18B (90 aa).

Belongs to the bacterial ribosomal protein bS18 family. As to quaternary structure, part of the 30S ribosomal subunit. Forms a tight heterodimer with protein bS6.

Functionally, binds as a heterodimer with protein bS6 to the central domain of the 16S rRNA, where it helps stabilize the platform of the 30S subunit. This chain is Small ribosomal subunit protein bS18B, found in Roseiflexus sp. (strain RS-1).